The chain runs to 153 residues: DNA gyrase inhibitor 1 (153 aa).

This sequence belongs to the DNA gyrase inhibitor family. Interacts with DNA gyrase.

The protein resides in the cytoplasm. Functionally, inhibits the supercoiling activity of DNA gyrase. Acts by inhibiting DNA gyrase at an early step, prior to (or at the step of) binding of DNA by the gyrase. It protects cells against toxins that target DNA gyrase, by inhibiting activity of these toxins and reducing the formation of lethal double-strand breaks in the cell. The polypeptide is DNA gyrase inhibitor 1 (Dickeya dadantii (strain 3937) (Erwinia chrysanthemi (strain 3937))).